A 507-amino-acid chain; its full sequence is ATP synthase subunit alpha, chloroplastic (507 aa).

170 to 177 contacts ATP; the sequence is GDRQTGKT. A Phosphothreonine modification is found at Thr-257.

Belongs to the ATPase alpha/beta chains family. As to quaternary structure, F-type ATPases have 2 components, CF(1) - the catalytic core - and CF(0) - the membrane proton channel. CF(1) has five subunits: alpha(3), beta(3), gamma(1), delta(1), epsilon(1). CF(0) has four main subunits: a, b, b' and c.

It localises to the plastid. It is found in the chloroplast thylakoid membrane. It catalyses the reaction ATP + H2O + 4 H(+)(in) = ADP + phosphate + 5 H(+)(out). Functionally, produces ATP from ADP in the presence of a proton gradient across the membrane. The alpha chain is a regulatory subunit. This is ATP synthase subunit alpha, chloroplastic from Arabis hirsuta (Hairy rock-cress).